We begin with the raw amino-acid sequence, 152 residues long: Ribosomal RNA large subunit methyltransferase H (152 aa).

S-adenosyl-L-methionine contacts are provided by residues leucine 68, glycine 100, and 119–124; that span reads LGVMTW.

The protein belongs to the RNA methyltransferase RlmH family. Homodimer.

The protein localises to the cytoplasm. It carries out the reaction pseudouridine(1915) in 23S rRNA + S-adenosyl-L-methionine = N(3)-methylpseudouridine(1915) in 23S rRNA + S-adenosyl-L-homocysteine + H(+). Its function is as follows. Specifically methylates the pseudouridine at position 1915 (m3Psi1915) in 23S rRNA. This is Ribosomal RNA large subunit methyltransferase H from Rhodospirillum rubrum (strain ATCC 11170 / ATH 1.1.1 / DSM 467 / LMG 4362 / NCIMB 8255 / S1).